The following is a 791-amino-acid chain: 1-phosphatidylinositol 4,5-bisphosphate phosphodiesterase delta-4 (791 aa).

One can recognise a PH domain in the interval 16-124; it reads LLMQKGTMMR…WMQGLQLLVG (109 aa). The interval 26-53 is substrate binding; it reads KVRSKSWKKLRFFRLQDDGMTVWHARQA. 3 EF-hand domains span residues 134 to 169, 170 to 205, and 207 to 237; these read RLDQ…MNVE, MDQE…LTQR, and EVQE…EQKE. Ca(2+) is bound by residues aspartate 147, asparagine 149, aspartate 151, arginine 153, glutamate 158, aspartate 183, serine 185, serine 187, threonine 189, and glutamate 194. The GBA motif lies at 213–243; the sequence is EKFSSDGQKLTLLEFVDFLQEEQKEGERASD. Residues 290–435 form the PI-PLC X-box domain; that stretch reads QDMTQPLNHY…LRGKILVKGK (146 aa). Residue histidine 305 is part of the active site. Ca(2+) contacts are provided by asparagine 306, glutamate 335, and aspartate 337. Histidine 350 is an active-site residue. Glutamate 384 provides a ligand contact to Ca(2+). Residues lysine 433, lysine 435, serine 551, and arginine 578 each contribute to the substrate site. The PI-PLC Y-box domain maps to 522-638; sequence LSALVVYLKA…GYVLKPDFLR (117 aa). One can recognise a C2 domain in the interval 638–765; sequence RDAQSSFHPE…QGYRHIHLLS (128 aa). Ca(2+) is bound by residues isoleucine 679, aspartate 681, asparagine 705, aspartate 734, tyrosine 735, and aspartate 736. Positions 760–763 match the PDZ-binding motif; it reads HIHL.

In terms of assembly, interacts with GRIP1. Interacts (via GBA motif) with guanine nucleotide-binding protein G(i) alpha subunit GNAI3 (inactive GDP-bound form); low-affinity interaction. The cofactor is Ca(2+).

Its subcellular location is the membrane. It localises to the nucleus. The protein localises to the cytoplasm. It is found in the endoplasmic reticulum. It catalyses the reaction a 1,2-diacyl-sn-glycero-3-phospho-(1D-myo-inositol-4,5-bisphosphate) + H2O = 1D-myo-inositol 1,4,5-trisphosphate + a 1,2-diacyl-sn-glycerol + H(+). It carries out the reaction a 1,2-diacyl-sn-glycero-3-phospho-(1D-myo-inositol) + H2O = 1D-myo-inositol 1-phosphate + a 1,2-diacyl-sn-glycerol + H(+). Hydrolyzes the phosphatidylinositol 4,5-bisphosphate (PIP2) to generate 2 second messenger molecules diacylglycerol (DAG) and inositol 1,4,5-trisphosphate (IP3). DAG mediates the activation of protein kinase C (PKC), while IP3 releases Ca(2+) from intracellular stores. Required for acrosome reaction in sperm during fertilization, probably by acting as an important enzyme for intracellular Ca(2+) mobilization in the zona pellucida-induced acrosome reaction. May play a role in cell growth. Modulates the liver regeneration in cooperation with nuclear PKC. Overexpression up-regulates the Erk signaling pathway and proliferation. In Bos taurus (Bovine), this protein is 1-phosphatidylinositol 4,5-bisphosphate phosphodiesterase delta-4 (PLCD4).